The chain runs to 181 residues: Nucleoside-triphosphatase THEP1 (181 aa).

Residues 12 to 19 (GPVGSIKS) and 104 to 111 (VIVIDEIG) contribute to the ATP site.

This sequence belongs to the THEP1 NTPase family.

The enzyme catalyses a ribonucleoside 5'-triphosphate + H2O = a ribonucleoside 5'-diphosphate + phosphate + H(+). Its function is as follows. Has nucleotide phosphatase activity towards ATP, GTP, CTP, TTP and UTP. May hydrolyze nucleoside diphosphates with lower efficiency. The sequence is that of Nucleoside-triphosphatase THEP1 from Thermoplasma acidophilum (strain ATCC 25905 / DSM 1728 / JCM 9062 / NBRC 15155 / AMRC-C165).